The chain runs to 260 residues: Small ribosomal subunit protein uS2 (260 aa).

The interval 240-260 is disordered; sequence VLKPKLPYQPNRRPYQETVKK.

It belongs to the universal ribosomal protein uS2 family.

The sequence is that of Small ribosomal subunit protein uS2 from Phytoplasma australiense.